A 150-amino-acid chain; its full sequence is Macrodomain Ter protein (150 aa).

The protein belongs to the MatP family. Homodimer.

It is found in the cytoplasm. Required for spatial organization of the terminus region of the chromosome (Ter macrodomain) during the cell cycle. Prevents early segregation of duplicated Ter macrodomains during cell division. Binds specifically to matS, which is a 13 bp signature motif repeated within the Ter macrodomain. The polypeptide is Macrodomain Ter protein (Shigella dysenteriae serotype 1 (strain Sd197)).